Consider the following 249-residue polypeptide: Phosphate import ATP-binding protein PstB 3 (249 aa).

In terms of domain architecture, ABC transporter spans 4–244 (LVINNLDLYY…PQDERTENYI (241 aa)). 36-43 (GPSGCGKS) contacts ATP.

This sequence belongs to the ABC transporter superfamily. Phosphate importer (TC 3.A.1.7) family. The complex is composed of two ATP-binding proteins (PstB), two transmembrane proteins (PstC and PstA) and a solute-binding protein (PstS).

Its subcellular location is the cell membrane. The catalysed reaction is phosphate(out) + ATP + H2O = ADP + 2 phosphate(in) + H(+). In terms of biological role, part of the ABC transporter complex PstSACB involved in phosphate import. Responsible for energy coupling to the transport system. This is Phosphate import ATP-binding protein PstB 3 from Streptococcus agalactiae serotype Ia (strain ATCC 27591 / A909 / CDC SS700).